A 281-amino-acid polypeptide reads, in one-letter code: UPF0162 protein PD_0709 (281 aa).

TPR repeat units follow at residues 193-226 and 227-260; these read VRILRNLHSVYANTDRWDRAARCADRILKLVPNQ and PEALRDRGLAYLQLGHRSGALNDLKRYLQLYPST.

Belongs to the UPF0162 family.

The sequence is that of UPF0162 protein PD_0709 from Xylella fastidiosa (strain Temecula1 / ATCC 700964).